We begin with the raw amino-acid sequence, 1175 residues long: Pyruvate carboxylase (1175 aa).

The region spanning 22 to 474 is the Biotin carboxylation domain; the sequence is NANKILVANR…WTTFIDDTPS (453 aa). Positions 140, 224, and 259 each coordinate ATP. The ATP-grasp domain occupies 144–341; the sequence is RNLAGKCNVP…IVAAQIQIAA (198 aa). The active site involves arginine 316. A Pyruvate carboxyltransferase domain is found at 561 to 828; it reads CLIMDTTWRD…NTGITEQNAR (268 aa). Residues 569–573 and arginine 642 each bind substrate; that span reads RDAHQ. Residue aspartate 570 participates in a divalent metal cation binding. A divalent metal cation is bound by residues lysine 738, histidine 768, and histidine 770. Position 738 is an N6-carboxylysine (lysine 738). Threonine 902 contributes to the substrate binding site. The Biotinyl-binding domain maps to 1099–1174; that stretch reads KADAHNPNEV…DAGDLICKIT (76 aa). Lysine 1140 is subject to N6-biotinyllysine.

Biotin is required as a cofactor. The cofactor is Zn(2+).

Its subcellular location is the cytoplasm. The catalysed reaction is hydrogencarbonate + pyruvate + ATP = oxaloacetate + ADP + phosphate + H(+). The protein operates within carbohydrate biosynthesis; gluconeogenesis. Functionally, pyruvate carboxylase catalyzes a 2-step reaction, involving the ATP-dependent carboxylation of the covalently attached biotin in the first step and the transfer of the carboxyl group to pyruvate in the second. This Pichia angusta (Yeast) protein is Pyruvate carboxylase (PYC).